The primary structure comprises 148 residues: Probable glycine cleavage system H protein 2 (148 aa).

One can recognise a Lipoyl-binding domain in the interval 32–114 (VIVVGITDIA…YGKGWLVKMK (83 aa)). Residue lysine 73 is modified to N6-lipoyllysine.

Belongs to the GcvH family. As to quaternary structure, the glycine cleavage system is composed of four proteins: P, T, L and H. The cofactor is (R)-lipoate.

The glycine cleavage system catalyzes the degradation of glycine. The H protein shuttles the methylamine group of glycine from the P protein to the T protein. This is Probable glycine cleavage system H protein 2 from Sulfurisphaera tokodaii (strain DSM 16993 / JCM 10545 / NBRC 100140 / 7) (Sulfolobus tokodaii).